A 97-amino-acid polypeptide reads, in one-letter code: Small ribosomal subunit protein bS20 (97 aa).

Belongs to the bacterial ribosomal protein bS20 family.

Functionally, binds directly to 16S ribosomal RNA. This is Small ribosomal subunit protein bS20 from Prochlorococcus marinus (strain MIT 9301).